The following is a 370-amino-acid chain: Phospho-N-acetylmuramoyl-pentapeptide-transferase (370 aa).

Transmembrane regions (helical) follow at residues 15 to 35 (PLEG…AAFA), 44 to 64 (LLSL…WWGV), 93 to 113 (MGGL…SWSG), 115 to 135 (AAEQ…VGGI), 155 to 175 (LLLQ…RGWI), 183 to 203 (FDIN…VFLA), 213 to 233 (GLDG…ALQL), 240 to 260 (GDPS…GFLV), 268 to 288 (VFMG…VALL), 296 to 316 (LIMG…VWVF), and 347 to 367 (QLVV…GIFF).

It belongs to the glycosyltransferase 4 family. MraY subfamily. Mg(2+) serves as cofactor.

It localises to the cell inner membrane. It catalyses the reaction UDP-N-acetyl-alpha-D-muramoyl-L-alanyl-gamma-D-glutamyl-meso-2,6-diaminopimeloyl-D-alanyl-D-alanine + di-trans,octa-cis-undecaprenyl phosphate = di-trans,octa-cis-undecaprenyl diphospho-N-acetyl-alpha-D-muramoyl-L-alanyl-D-glutamyl-meso-2,6-diaminopimeloyl-D-alanyl-D-alanine + UMP. The protein operates within cell wall biogenesis; peptidoglycan biosynthesis. In terms of biological role, catalyzes the initial step of the lipid cycle reactions in the biosynthesis of the cell wall peptidoglycan: transfers peptidoglycan precursor phospho-MurNAc-pentapeptide from UDP-MurNAc-pentapeptide onto the lipid carrier undecaprenyl phosphate, yielding undecaprenyl-pyrophosphoryl-MurNAc-pentapeptide, known as lipid I. This Synechococcus sp. (strain CC9311) protein is Phospho-N-acetylmuramoyl-pentapeptide-transferase.